Here is a 336-residue protein sequence, read N- to C-terminus: Dihydroorotate dehydrogenase (quinone) (336 aa).

Residues 62 to 66 (AGLDK) and threonine 86 contribute to the FMN site. A substrate-binding site is contributed by lysine 66. Substrate is bound at residue 111–115 (NRMGF). Asparagine 139 and asparagine 172 together coordinate FMN. Position 172 (asparagine 172) interacts with substrate. Serine 175 functions as the Nucleophile in the catalytic mechanism. Residue asparagine 177 participates in substrate binding. FMN is bound by residues lysine 217 and threonine 245. 246 to 247 (NT) contacts substrate. FMN is bound by residues glycine 268, glycine 297, and 318-319 (YS).

Belongs to the dihydroorotate dehydrogenase family. Type 2 subfamily. As to quaternary structure, monomer. The cofactor is FMN.

The protein resides in the cell membrane. The catalysed reaction is (S)-dihydroorotate + a quinone = orotate + a quinol. The protein operates within pyrimidine metabolism; UMP biosynthesis via de novo pathway; orotate from (S)-dihydroorotate (quinone route): step 1/1. In terms of biological role, catalyzes the conversion of dihydroorotate to orotate with quinone as electron acceptor. This chain is Dihydroorotate dehydrogenase (quinone), found in Enterobacter sp. (strain 638).